Reading from the N-terminus, the 1285-residue chain is Protein cramped-like (1285 aa).

A disordered region spans residues 1–161; it reads MTVKLGDAGS…EGKKVRRQWE (161 aa). A compositionally biased stretch (basic and acidic residues) spans 13–24; it reads EGLKKLGKRTAD. Residues 57-71 show a composition bias toward pro residues; sequence PAPPRGLPTPSPPQG. Positions 100–116 are enriched in gly residues; that stretch reads GSGGASGSGPRGKGSDG. 2 stretches are compositionally biased toward low complexity: residues 117 to 126 and 134 to 147; these read GASSSGNVSG and GGSR…GSSG. Residues 148–161 show a composition bias toward basic and acidic residues; that stretch reads PEKEEGKKVRRQWE. An SANT domain is found at 158–221; it reads RQWESWSTED…FYYRTWHKIT (64 aa). Serine 304 bears the Phosphoserine mark. Disordered regions lie at residues 456–519, 579–673, 766–843, 994–1055, 1068–1107, and 1132–1172; these read GQLK…GPHL, RADT…VPAS, NTAS…SDSD, SSGI…SPAL, GLSI…LSQG, and PLSP…YPSD. The span at 479–503 shows a compositional bias: low complexity; sequence ASQSSGESSPESAPAEGAAPSLSSP. Composition is skewed to basic and acidic residues over residues 505–519 and 579–589; these read APDR…GPHL and RADTRSGREHP. Composition is skewed to polar residues over residues 654–664 and 766–784; these read EHLSSQGQPAT and NTAS…STTP. A compositionally biased stretch (low complexity) spans 792–803; it reads NSRSPRCSRNPS. The span at 804 to 813 shows a compositional bias: polar residues; the sequence is TLRSNKTFPS. The segment covering 833-843 has biased composition (low complexity); the sequence is GPSSTGSSDSD. Polar residues predominate over residues 994–1012; the sequence is SSGISPLSSEQATTAISGQ. Composition is skewed to low complexity over residues 1069–1086 and 1141–1156; these read LSIP…LSPP and SDSS…SPQP. Serine 1284 bears the Phosphoserine mark.

This sequence belongs to the cramped family.

The protein resides in the nucleus. The chain is Protein cramped-like from Mus musculus (Mouse).